The following is a 67-amino-acid chain: ATP synthase F(0) complex subunit 8 (67 aa).

Residues 8–24 (TWFTTILSTSFSIIHRL) form a helical membrane-spanning segment. The residue at position 54 (lysine 54) is an N6-acetyllysine; alternate. Lysine 54 is modified (N6-succinyllysine; alternate). Lysine 57 is subject to N6-acetyllysine.

Belongs to the ATPase protein 8 family. In terms of assembly, component of the ATP synthase complex composed at least of ATP5F1A/subunit alpha, ATP5F1B/subunit beta, ATP5MC1/subunit c (homooctomer), MT-ATP6/subunit a, MT-ATP8/subunit 8, ATP5ME/subunit e, ATP5MF/subunit f, ATP5MG/subunit g, ATP5MK/subunit k, ATP5MJ/subunit j, ATP5F1C/subunit gamma, ATP5F1D/subunit delta, ATP5F1E/subunit epsilon, ATP5PF/subunit F6, ATP5PB/subunit b, ATP5PD/subunit d, ATP5PO/subunit OSCP. ATP synthase complex consists of a soluble F(1) head domain (subunits alpha(3) and beta(3)) - the catalytic core - and a membrane F(0) domain - the membrane proton channel (subunits c, a, 8, e, f, g, k and j). These two domains are linked by a central stalk (subunits gamma, delta, and epsilon) rotating inside the F1 region and a stationary peripheral stalk (subunits F6, b, d, and OSCP). Interacts with PRICKLE3.

The protein resides in the mitochondrion membrane. Its function is as follows. Subunit 8, of the mitochondrial membrane ATP synthase complex (F(1)F(0) ATP synthase or Complex V) that produces ATP from ADP in the presence of a proton gradient across the membrane which is generated by electron transport complexes of the respiratory chain. ATP synthase complex consist of a soluble F(1) head domain - the catalytic core - and a membrane F(1) domain - the membrane proton channel. These two domains are linked by a central stalk rotating inside the F(1) region and a stationary peripheral stalk. During catalysis, ATP synthesis in the catalytic domain of F(1) is coupled via a rotary mechanism of the central stalk subunits to proton translocation. In vivo, can only synthesize ATP although its ATP hydrolase activity can be activated artificially in vitro. Part of the complex F(0) domain. This chain is ATP synthase F(0) complex subunit 8, found in Glis glis (Fat dormouse).